A 336-amino-acid polypeptide reads, in one-letter code: NAC domain-containing protein 100 (336 aa).

Residues 16–166 (LPPGFRFHPT…EWVICRVFQK (151 aa)) form the NAC domain. Residues 113-172 (VGMKKTLVFYRGRAPKGQKTNWVMHEYRLEGKFSAHNLPKTAKNEWVICRVFQKSAGGKK) mediate DNA binding. The disordered stretch occupies residues 313–336 (RRFDSQEDPSSSTGPVDLEPFWNY).

It is found in the nucleus. In terms of biological role, binds to the promoter regions of genes involved in chlorophyll catabolic processes, such as NYC1, SGR1, SGR2 and PAO. In Arabidopsis thaliana (Mouse-ear cress), this protein is NAC domain-containing protein 100.